Here is a 335-residue protein sequence, read N- to C-terminus: Anthranilate phosphoribosyltransferase (335 aa).

Residues G79, 82 to 83, T87, 89 to 92, 107 to 115, and A119 contribute to the 5-phospho-alpha-D-ribose 1-diphosphate site; these read GD, NIST, and KHGNRSASS. G79 contributes to the anthranilate binding site. S91 is a binding site for Mg(2+). N110 is a binding site for anthranilate. R165 is a binding site for anthranilate. Residues D224 and E225 each coordinate Mg(2+).

This sequence belongs to the anthranilate phosphoribosyltransferase family. Homodimer. Mg(2+) serves as cofactor.

The catalysed reaction is N-(5-phospho-beta-D-ribosyl)anthranilate + diphosphate = 5-phospho-alpha-D-ribose 1-diphosphate + anthranilate. The protein operates within amino-acid biosynthesis; L-tryptophan biosynthesis; L-tryptophan from chorismate: step 2/5. In terms of biological role, catalyzes the transfer of the phosphoribosyl group of 5-phosphorylribose-1-pyrophosphate (PRPP) to anthranilate to yield N-(5'-phosphoribosyl)-anthranilate (PRA). This chain is Anthranilate phosphoribosyltransferase, found in Methanobrevibacter smithii (strain ATCC 35061 / DSM 861 / OCM 144 / PS).